The chain runs to 239 residues: Octanoyl-[acyl-carrier-protein]:protein N-octanoyltransferase LIPT2, mitochondrial (239 aa).

The transit peptide at 1 to 18 (MSVPVLRVRRLGLVGYAE) directs the protein to the mitochondrion. The region spanning 37–217 (GSPGGALLLC…AFEEEFQCQL (181 aa)) is the BPL/LPL catalytic domain. Substrate is bound by residues 81 to 88 (RGGLITFH), 147 to 149 (AIG), and 160 to 162 (GLA). Cys178 serves as the catalytic Acyl-thioester intermediate. The segment at 220 to 239 (EQNPEQNPVQNRPDRDAGPL) is disordered.

The protein belongs to the LipB family.

It localises to the mitochondrion. The catalysed reaction is octanoyl-[ACP] + L-lysyl-[protein] = N(6)-octanoyl-L-lysyl-[protein] + holo-[ACP] + H(+). It functions in the pathway protein modification; protein lipoylation via endogenous pathway; protein N(6)-(lipoyl)lysine from octanoyl-[acyl-carrier-protein]: step 1/2. Catalyzes the transfer of endogenously produced octanoic acid from octanoyl-acyl-carrier-protein (octanoyl-ACP) onto the lipoyl domains of lipoate-dependent enzymes such as the protein H of the glycine cleavage system (GCSH). Lipoyl-ACP can also act as a substrate although octanoyl-ACP is likely to be the physiological substrate. This Xenopus tropicalis (Western clawed frog) protein is Octanoyl-[acyl-carrier-protein]:protein N-octanoyltransferase LIPT2, mitochondrial (lipt2).